The following is a 154-amino-acid chain: Ribonuclease P protein component (154 aa).

It belongs to the RnpA family. In terms of assembly, consists of a catalytic RNA component (M1 or rnpB) and a protein subunit.

It carries out the reaction Endonucleolytic cleavage of RNA, removing 5'-extranucleotides from tRNA precursor.. In terms of biological role, RNaseP catalyzes the removal of the 5'-leader sequence from pre-tRNA to produce the mature 5'-terminus. It can also cleave other RNA substrates such as 4.5S RNA. The protein component plays an auxiliary but essential role in vivo by binding to the 5'-leader sequence and broadening the substrate specificity of the ribozyme. The sequence is that of Ribonuclease P protein component from Chlorobaculum tepidum (strain ATCC 49652 / DSM 12025 / NBRC 103806 / TLS) (Chlorobium tepidum).